The primary structure comprises 692 residues: UvrABC system protein B (692 aa).

In terms of domain architecture, Helicase ATP-binding spans 32 to 418; it reads DNIENGEKAQ…QTDTIVEQII (387 aa). 45–52 contributes to the ATP binding site; that stretch reads GATGTGKT. Positions 98 to 121 match the Beta-hairpin motif; that stretch reads YYDYYQPEAYVPSSDTYIEKDSSV. The Helicase C-terminal domain maps to 436–631; sequence QIDDLVGEIH…TIKKEIRDLI (196 aa). Residues 656 to 691 form the UVR domain; the sequence is KALVKKLEKEMQQAASALDFEGAAQLRDMVLELRAM.

This sequence belongs to the UvrB family. Forms a heterotetramer with UvrA during the search for lesions. Interacts with UvrC in an incision complex.

It is found in the cytoplasm. Functionally, the UvrABC repair system catalyzes the recognition and processing of DNA lesions. A damage recognition complex composed of 2 UvrA and 2 UvrB subunits scans DNA for abnormalities. Upon binding of the UvrA(2)B(2) complex to a putative damaged site, the DNA wraps around one UvrB monomer. DNA wrap is dependent on ATP binding by UvrB and probably causes local melting of the DNA helix, facilitating insertion of UvrB beta-hairpin between the DNA strands. Then UvrB probes one DNA strand for the presence of a lesion. If a lesion is found the UvrA subunits dissociate and the UvrB-DNA preincision complex is formed. This complex is subsequently bound by UvrC and the second UvrB is released. If no lesion is found, the DNA wraps around the other UvrB subunit that will check the other stand for damage. The chain is UvrABC system protein B from Lactococcus lactis subsp. lactis (strain IL1403) (Streptococcus lactis).